The primary structure comprises 98 residues: Small ribosomal subunit protein bTHXm (98 aa).

The N-terminal 35 residues, 1–35 (MAAMQWCGAMTRRIMMTQRTSAALNCSARYSSLSP), are a transit peptide targeting the mitochondrion. Positions 52 to 71 (DKKTKKGKRFKGSYGNSRGK) are disordered. Positions 53 to 62 (KKTKKGKRFK) are enriched in basic residues.

This sequence belongs to the bacterial ribosomal protein bTHX family. Component of the mitochondrial ribosome small subunit.

Its subcellular location is the mitochondrion. The polypeptide is Small ribosomal subunit protein bTHXm (Arabidopsis thaliana (Mouse-ear cress)).